Consider the following 36-residue polypeptide: Adenylate kinase (36 aa).

10-15 (GAGKGT) provides a ligand contact to ATP. Positions 30-36 (ATGDLFR) are NMP. T31 and R36 together coordinate AMP.

It belongs to the adenylate kinase family. Monomer.

The protein localises to the cytoplasm. The catalysed reaction is AMP + ATP = 2 ADP. The protein operates within purine metabolism; AMP biosynthesis via salvage pathway; AMP from ADP: step 1/1. Catalyzes the reversible transfer of the terminal phosphate group between ATP and AMP. Plays an important role in cellular energy homeostasis and in adenine nucleotide metabolism. This chain is Adenylate kinase (adk), found in Streptomyces griseus.